The following is a 144-amino-acid chain: Deoxyuridine 5'-triphosphate nucleotidohydrolase (144 aa).

Substrate contacts are provided by residues 63-65 (RSG), asparagine 76, and 80-82 (TID).

Belongs to the dUTPase family. Requires Mg(2+) as cofactor.

It carries out the reaction dUTP + H2O = dUMP + diphosphate + H(+). It participates in pyrimidine metabolism; dUMP biosynthesis; dUMP from dCTP (dUTP route): step 2/2. In terms of biological role, this enzyme is involved in nucleotide metabolism: it produces dUMP, the immediate precursor of thymidine nucleotides and it decreases the intracellular concentration of dUTP so that uracil cannot be incorporated into DNA. The chain is Deoxyuridine 5'-triphosphate nucleotidohydrolase from Bacteroides thetaiotaomicron (strain ATCC 29148 / DSM 2079 / JCM 5827 / CCUG 10774 / NCTC 10582 / VPI-5482 / E50).